Consider the following 585-residue polypeptide: Glutamate decarboxylase 2 (585 aa).

The interval 1–25 is disordered; sequence MASPGSGFWSFGSEDGSGDPENPGT. Phosphoserine occurs at positions 3, 6, 10, 13, and 17. Residues C30 and C45 are each lipidated (S-palmitoyl cysteine). 181 to 183 provides a ligand contact to substrate; that stretch reads QLS. K396 bears the N6-(pyridoxal phosphate)lysine mark. R558 contacts substrate.

This sequence belongs to the group II decarboxylase family. Homodimer. Requires pyridoxal 5'-phosphate as cofactor. Post-translationally, the N-terminus is blocked. In terms of processing, phosphorylated; which does not affect kinetic parameters or subcellular location. Palmitoylated; which is required for presynaptic clustering.

The protein resides in the cytoplasm. It is found in the cytosol. Its subcellular location is the cytoplasmic vesicle. It localises to the presynaptic cell membrane. The protein localises to the golgi apparatus membrane. It catalyses the reaction L-glutamate + H(+) = 4-aminobutanoate + CO2. Catalyzes the production of GABA. In Rattus norvegicus (Rat), this protein is Glutamate decarboxylase 2 (Gad2).